Consider the following 1303-residue polypeptide: DNA-directed RNA polymerase subunit beta'' (1303 aa).

Zn(2+) is bound by residues Cys-225, Cys-299, Cys-306, and Cys-309.

The protein belongs to the RNA polymerase beta' chain family. RpoC2 subfamily. As to quaternary structure, in plastids the minimal PEP RNA polymerase catalytic core is composed of four subunits: alpha, beta, beta', and beta''. When a (nuclear-encoded) sigma factor is associated with the core the holoenzyme is formed, which can initiate transcription. Requires Zn(2+) as cofactor.

The protein resides in the plastid. It localises to the chloroplast. The catalysed reaction is RNA(n) + a ribonucleoside 5'-triphosphate = RNA(n+1) + diphosphate. Functionally, DNA-dependent RNA polymerase catalyzes the transcription of DNA into RNA using the four ribonucleoside triphosphates as substrates. This Rhodomonas salina (Cryptomonas salina) protein is DNA-directed RNA polymerase subunit beta''.